Consider the following 179-residue polypeptide: MAKLHDYYKDEVIKQLMSQFDYNSVMQVPRVEKITLNMGVGEAIADKKLLDNAAADLAAISGQKPLITKARKSVAGFKIRQGYPIGCKVTLRGERMWEFFERLISIAVPRIRDFRGLSAKSFDGRGNYSMGVREQIIFPEIDYDKVDRVRGLDITITTTAKSDDEGRALLAAFNFPFRK.

Belongs to the universal ribosomal protein uL5 family. As to quaternary structure, part of the 50S ribosomal subunit; part of the 5S rRNA/L5/L18/L25 subcomplex. Contacts the 5S rRNA and the P site tRNA. Forms a bridge to the 30S subunit in the 70S ribosome.

In terms of biological role, this is one of the proteins that bind and probably mediate the attachment of the 5S RNA into the large ribosomal subunit, where it forms part of the central protuberance. In the 70S ribosome it contacts protein S13 of the 30S subunit (bridge B1b), connecting the 2 subunits; this bridge is implicated in subunit movement. Contacts the P site tRNA; the 5S rRNA and some of its associated proteins might help stabilize positioning of ribosome-bound tRNAs. The chain is Large ribosomal subunit protein uL5 from Buchnera aphidicola subsp. Acyrthosiphon kondoi (Acyrthosiphon kondoi symbiotic bacterium).